We begin with the raw amino-acid sequence, 602 residues long: 4-hydroxy-3-methylbut-2-en-1-yl diphosphate synthase (flavodoxin) (602 aa).

Cys508, Cys511, Cys543, and Glu550 together coordinate [4Fe-4S] cluster.

It belongs to the IspG family. It depends on [4Fe-4S] cluster as a cofactor.

The enzyme catalyses (2E)-4-hydroxy-3-methylbut-2-enyl diphosphate + oxidized [flavodoxin] + H2O + 2 H(+) = 2-C-methyl-D-erythritol 2,4-cyclic diphosphate + reduced [flavodoxin]. The protein operates within isoprenoid biosynthesis; isopentenyl diphosphate biosynthesis via DXP pathway; isopentenyl diphosphate from 1-deoxy-D-xylulose 5-phosphate: step 5/6. Functionally, converts 2C-methyl-D-erythritol 2,4-cyclodiphosphate (ME-2,4cPP) into 1-hydroxy-2-methyl-2-(E)-butenyl 4-diphosphate. The protein is 4-hydroxy-3-methylbut-2-en-1-yl diphosphate synthase (flavodoxin) of Chlamydia trachomatis serovar D (strain ATCC VR-885 / DSM 19411 / UW-3/Cx).